We begin with the raw amino-acid sequence, 284 residues long: NADPH-dependent 7-cyano-7-deazaguanine reductase (284 aa).

91–93 (IES) provides a ligand contact to substrate. Residue 93 to 94 (SK) coordinates NADPH. The active-site Thioimide intermediate is Cys-192. The active-site Proton donor is the Asp-199. Residue 231 to 232 (HE) coordinates substrate. An NADPH-binding site is contributed by 260 to 261 (RG).

This sequence belongs to the GTP cyclohydrolase I family. QueF type 2 subfamily. As to quaternary structure, homodimer.

It is found in the cytoplasm. The catalysed reaction is 7-aminomethyl-7-carbaguanine + 2 NADP(+) = 7-cyano-7-deazaguanine + 2 NADPH + 3 H(+). Its pathway is tRNA modification; tRNA-queuosine biosynthesis. Functionally, catalyzes the NADPH-dependent reduction of 7-cyano-7-deazaguanine (preQ0) to 7-aminomethyl-7-deazaguanine (preQ1). The sequence is that of NADPH-dependent 7-cyano-7-deazaguanine reductase from Shewanella denitrificans (strain OS217 / ATCC BAA-1090 / DSM 15013).